Here is a 537-residue protein sequence, read N- to C-terminus: NEDD4-binding protein 3 (537 aa).

Position 172 is a phosphoserine (serine 172). Disordered regions lie at residues 173–234, 328–361, and 423–458; these read LDEG…VLSC, KELR…EARW, and QEQA…REGA. The segment covering 178–207 has biased composition (low complexity); that stretch reads PEPSLSDSSSGGSFGRSPGTGPSPFSSSLG. Residues 295–501 adopt a coiled-coil conformation; sequence VERLHEVAQK…RVLRYQREIQ (207 aa). The span at 351 to 361 shows a compositional bias: basic and acidic residues; that stretch reads PNARPEEEARW.

The protein belongs to the N4BP3 family. As to quaternary structure, binds NEDD4. Interacts with 14-3-3 proteins. Interacts with MAVS.

The protein resides in the cytoplasmic vesicle. It localises to the cell projection. The protein localises to the axon. Its subcellular location is the dendrite. Functionally, plays a positive role in the antiviral innate immune signaling pathway. Mechanistically, interacts with MAVS and functions as a positive regulator to promote 'Lys-63'-linked polyubiquitination of MAVS and thus strengthens the interaction between MAVS and TRAF2. Also plays a role in axon and dendrite arborization during cranial nerve development. May also be important for neural crest migration and early development of other anterior structures including eye, brain and cranial cartilage. This chain is NEDD4-binding protein 3 (N4bp3), found in Mus musculus (Mouse).